The primary structure comprises 153 residues: DNA gyrase inhibitor 1 (153 aa).

This sequence belongs to the DNA gyrase inhibitor family. In terms of assembly, interacts with DNA gyrase.

The protein localises to the cytoplasm. Functionally, inhibits the supercoiling activity of DNA gyrase. Acts by inhibiting DNA gyrase at an early step, prior to (or at the step of) binding of DNA by the gyrase. It protects cells against toxins that target DNA gyrase, by inhibiting activity of these toxins and reducing the formation of lethal double-strand breaks in the cell. The chain is DNA gyrase inhibitor 1 from Dickeya dadantii (strain 3937) (Erwinia chrysanthemi (strain 3937)).